The chain runs to 272 residues: Troponin T, fast skeletal muscle (272 aa).

Residues 1-50 (MSDEETEQVEEQYEEEEEAQEEEVQEEAPEPEEVQEDAVAEEEREEDEEE) are compositionally biased toward acidic residues. Positions 1–75 (MSDEETEQVE…EKVDFDDIQK (75 aa)) are disordered. An N-acetylserine modification is found at serine 2. A Phosphoserine modification is found at serine 2. A compositionally biased stretch (basic and acidic residues) spans 63–75 (PEGEKVDFDDIQK). A Phosphoserine modification is found at serine 91. Residues 114–156 (RAERAEQQRIRAEKEREPQNRLAEEKARREEEDAKRRAEDDMK) show a composition bias toward basic and acidic residues. The disordered stretch occupies residues 114 to 193 (RAERAEQQRI…TAREMKKKIL (80 aa)). Serine 162, serine 169, and serine 170 each carry phosphoserine. Residues 184 to 193 (TAREMKKKIL) are compositionally biased toward basic and acidic residues. Residue serine 206 is modified to Phosphoserine. Residue tyrosine 222 is modified to Phosphotyrosine. Residues 248–272 (RIDQAQKHSKKAGATAKGKVGGRWK) are disordered.

This sequence belongs to the troponin T family. As to expression, expressed predominantly in skeletal muscle.

In terms of biological role, troponin T is the tropomyosin-binding subunit of troponin, the thin filament regulatory complex which confers calcium-sensitivity to striated muscle actomyosin ATPase activity. In Mus musculus (Mouse), this protein is Troponin T, fast skeletal muscle (Tnnt3).